The sequence spans 763 residues: Polyribonucleotide nucleotidyltransferase (763 aa).

Aspartate 526 and aspartate 532 together coordinate Mg(2+). The KH domain maps to proline 592–isoleucine 651. An S1 motif domain is found at glycine 663–valine 732. The disordered stretch occupies residues serine 739 to alanine 763. Residues alanine 743–glutamate 752 show a composition bias toward basic and acidic residues.

This sequence belongs to the polyribonucleotide nucleotidyltransferase family. The cofactor is Mg(2+).

The protein resides in the cytoplasm. The enzyme catalyses RNA(n+1) + phosphate = RNA(n) + a ribonucleoside 5'-diphosphate. Its function is as follows. Involved in mRNA degradation. Catalyzes the phosphorolysis of single-stranded polyribonucleotides processively in the 3'- to 5'-direction. This Mycolicibacterium smegmatis (strain ATCC 700084 / mc(2)155) (Mycobacterium smegmatis) protein is Polyribonucleotide nucleotidyltransferase.